The following is a 414-amino-acid chain: Succinylornithine transaminase (414 aa).

Lys260 bears the N6-(pyridoxal phosphate)lysine mark.

This sequence belongs to the class-III pyridoxal-phosphate-dependent aminotransferase family. AstC subfamily. Pyridoxal 5'-phosphate serves as cofactor.

The enzyme catalyses N(2)-succinyl-L-ornithine + 2-oxoglutarate = N-succinyl-L-glutamate 5-semialdehyde + L-glutamate. It participates in amino-acid degradation; L-arginine degradation via AST pathway; L-glutamate and succinate from L-arginine: step 3/5. Catalyzes the transamination of N(2)-succinylornithine and alpha-ketoglutarate into N(2)-succinylglutamate semialdehyde and glutamate. Can also act as an acetylornithine aminotransferase. This chain is Succinylornithine transaminase, found in Yersinia pseudotuberculosis serotype I (strain IP32953).